Reading from the N-terminus, the 433-residue chain is ATP-dependent protease ATPase subunit HslU (433 aa).

Residues I18, 60 to 65 (GVGKTE), D246, E311, and R383 each bind ATP.

The protein belongs to the ClpX chaperone family. HslU subfamily. As to quaternary structure, a double ring-shaped homohexamer of HslV is capped on each side by a ring-shaped HslU homohexamer. The assembly of the HslU/HslV complex is dependent on binding of ATP.

It is found in the cytoplasm. ATPase subunit of a proteasome-like degradation complex; this subunit has chaperone activity. The binding of ATP and its subsequent hydrolysis by HslU are essential for unfolding of protein substrates subsequently hydrolyzed by HslV. HslU recognizes the N-terminal part of its protein substrates and unfolds these before they are guided to HslV for hydrolysis. The sequence is that of ATP-dependent protease ATPase subunit HslU from Cereibacter sphaeroides (strain KD131 / KCTC 12085) (Rhodobacter sphaeroides).